The primary structure comprises 380 residues: Cytochrome b (380 aa).

The next 4 membrane-spanning stretches (helical) occupy residues 33–53 (FGSL…FLAM), 77–98 (WLIR…YMHI), 113–133 (WNIG…GYVL), and 178–198 (FFAF…IHLL). Residues histidine 83 and histidine 97 each contribute to the heme b site. Heme b contacts are provided by histidine 182 and histidine 196. Histidine 201 is an a ubiquinone binding site. A run of 4 helical transmembrane segments spans residues 226–246 (YKDL…ALFS), 288–308 (LGGV…PLLH), 320–340 (ITQF…WIGG), and 347–367 (FIII…VLFP).

This sequence belongs to the cytochrome b family. As to quaternary structure, the cytochrome bc1 complex contains 3 respiratory subunits (MT-CYB, CYC1 and UQCRFS1), 2 core proteins (UQCRC1 and UQCRC2) and probably 6 low-molecular weight proteins. Heme b is required as a cofactor.

The protein resides in the mitochondrion inner membrane. Component of the ubiquinol-cytochrome c reductase complex (complex III or cytochrome b-c1 complex) that is part of the mitochondrial respiratory chain. The b-c1 complex mediates electron transfer from ubiquinol to cytochrome c. Contributes to the generation of a proton gradient across the mitochondrial membrane that is then used for ATP synthesis. This chain is Cytochrome b (mt-cyb), found in Carassius auratus (Goldfish).